Here is a 645-residue protein sequence, read N- to C-terminus: Envelope glycoprotein (645 aa).

Positions 1–33 (MESPAFSKPLKDKINPWGPLIIMGILVRAGASV) are cleaved as a signal peptide. Positions 32–237 (SVQRDSPHQV…QVLNVGPRVP (206 aa)) are receptor-binding domain (RBD). Residues 34 to 585 (QRDSPHQVFN…FNRSPWFTTL (552 aa)) lie on the Extracellular side of the membrane. N43 and N58 each carry an N-linked (GlcNAc...) asparagine; by host glycan. Intrachain disulfides connect C113/C130 and C122/C135. Positions 259–286 (PRPPRPPPSGAASMVPGAPPPSQQPGTG) are disordered. An N-linked (GlcNAc...) asparagine; by host glycan is attached at N301. Intrachain disulfides connect C311/C314, C311/C538, C341/C395, C360/C372, C402/C415, and C530/C537. A CXXC motif is present at residues 311-314 (CWLC). N-linked (GlcNAc...) asparagine; by host glycosylation is found at N333 and N340. Residues N373 and N409 are each glycosylated (N-linked (GlcNAc...) asparagine; by host). The fusion peptide stretch occupies residues 447 to 467 (VSLTLALLLGGLTMGGIAAGV). The stretch at 490-510 (DLGALEKSVSALEKSLTSLSE) forms a coiled coil. Residues 513-529 (LQNRRGLDLLFLKEGGL) are immunosuppression. The CX6CC motif lies at 530–538 (CAALKKECC). The helical transmembrane segment at 586 to 606 (ISTIMGPLIVLLLILLFGPCI) threads the bilayer. Residue C605 is the site of S-palmitoyl cysteine; by host attachment. The Cytoplasmic portion of the chain corresponds to 607-640 (LNRLVQFVKDRISVVQALVLTQQYHQLKSIDPEE). Residues 630 to 633 (YHQL) carry the YXXL motif; contains endocytosis signal motif.

In terms of assembly, the mature envelope protein (Env) consists of a trimer of SU-TM heterodimers attached by a labile interchain disulfide bond. The activated Env consists of SU monomers and TM trimers. Post-translationally, specific enzymatic cleavages in vivo yield mature proteins. Envelope glycoproteins are synthesized as an inactive precursor that is N-glycosylated and processed likely by host cell furin or by a furin-like protease in the Golgi to yield the mature SU and TM proteins. The cleavage site between SU and TM requires the minimal sequence [KR]-X-[KR]-R. The R-peptide is released from the C-terminus of the cytoplasmic tail of the TM protein upon particle formation as a result of proteolytic cleavage by the viral protease. Cleavage of this peptide is required for TM to become fusogenic. The CXXC motif is highly conserved across a broad range of retroviral envelope proteins. It is thought to participate in the formation of a labile disulfide bond possibly with the CX6CC motif present in the transmembrane protein. Isomerization of the intersubunit disulfide bond to an SU intrachain disulfide bond is thought to occur upon receptor recognition in order to allow membrane fusion. In terms of processing, the transmembrane protein is palmitoylated. Post-translationally, the R-peptide is palmitoylated.

The protein localises to the virion membrane. The protein resides in the host cell membrane. Functionally, the surface protein (SU) attaches the virus to the host cell by binding to its receptor. This interaction activates a thiol in a CXXC motif of the C-terminal domain, where the other Cys residue participates in the formation of the intersubunit disulfide. The activated thiol will attack the disulfide and cause its isomerization into a disulfide isomer within the motif. This leads to SU displacement and TM refolding, and is thought to activate its fusogenic potential by unmasking its fusion peptide. Fusion occurs at the host cell plasma membrane. The transmembrane protein (TM) acts as a class I viral fusion protein. Under the current model, the protein has at least 3 conformational states: pre-fusion native state, pre-hairpin intermediate state, and post-fusion hairpin state. During viral and target cell membrane fusion, the coiled coil regions (heptad repeats) assume a trimer-of-hairpins structure, positioning the fusion peptide in close proximity to the C-terminal region of the ectodomain. The formation of this structure appears to drive apposition and subsequent fusion of viral and target cell membranes. Membranes fusion leads to delivery of the nucleocapsid into the cytoplasm. This Xenotropic MuLV-related virus (isolate VP35) (XMRV) protein is Envelope glycoprotein (env).